Here is a 96-residue protein sequence, read N- to C-terminus: MNTKNFTPQESRTNAQQVRQQNQQSAQGTSSGFATEFASETNAQQVRQQNQQSAQANRMSGATAGGFNTEFASETNVQQVRQQNQQSEAKKRNNQQ.

Over residues 1–15 the composition is skewed to polar residues; that stretch reads MNTKNFTPQESRTNA. The segment at 1 to 96 is disordered; the sequence is MNTKNFTPQE…SEAKKRNNQQ (96 aa). The span at 16–27 shows a compositional bias: low complexity; it reads QQVRQQNQQSAQ. Residues 28–41 show a composition bias toward polar residues; it reads GTSSGFATEFASET. Repeats lie at residues 28–52 and 61–87; these read GTSS…QNQQ and GATA…NQQS. Composition is skewed to low complexity over residues 42-57 and 76-86; these read NAQQ…AQAN and NVQQVRQQNQQ.

Belongs to the gamma-type SASP family.

Its function is as follows. SASP are proteins degraded in the first minutes of spore germination and provide amino acids for both new protein synthesis and metabolism. These proteins may be involved in dormant spore's high resistance to UV light. This Laceyella sacchari (Thermoactinomyces thalpophilus) protein is Small, acid-soluble spore protein gamma-type.